Consider the following 462-residue polypeptide: Neuronal acetylcholine receptor subunit non-alpha-2 (462 aa).

The first 30 residues, 1–30 (MTLAVIGLFTLFTSIIAITPAREFVSLAER), serve as a signal peptide directing secretion. Over 31 to 234 (EDALLRELFQ…ITYSFILKRL (204 aa)) the chain is Extracellular. N53 and N168 each carry an N-linked (GlcNAc...) asparagine glycan. C155 and C169 are joined by a disulfide. A run of 3 helical transmembrane segments spans residues 235 to 259 (PLFY…VFYL), 267 to 284 (VSLS…LLVI), and 301 to 322 (YLLF…VINV). Residues 323 to 428 (HHRSSATYHP…WKFVAQVLDR (106 aa)) are Cytoplasmic-facing. Basic and acidic residues predominate over residues 362 to 372 (ELEPHSPDLKP). The interval 362 to 384 (ELEPHSPDLKPRNKKGPPGPEGE) is disordered. A helical transmembrane segment spans residues 429 to 446 (IFLWTFLTVSVLGTILIF).

The protein belongs to the ligand-gated ion channel (TC 1.A.9) family. Acetylcholine receptor (TC 1.A.9.1) subfamily. Neuronal AChR seems to be composed of two different type of subunits: alpha and beta.

The protein localises to the postsynaptic cell membrane. It is found in the cell membrane. In terms of biological role, after binding acetylcholine, the AChR responds by an extensive change in conformation that affects all subunits and leads to opening of an ion-conducting channel across the plasma membrane. The chain is Neuronal acetylcholine receptor subunit non-alpha-2 from Carassius auratus (Goldfish).